The chain runs to 730 residues: MKIESLDLPDEIKRFYENSGILELYPPQAEAVEKGLLEGKNLLAAIPTASGKTLLAELAMLKSVLNGGKALYIVPLRALASEKFRRFQEFSVLGMRVGISTGDYDRRDEGLGINDIIVATSEKTDSLLRNETAWMQEISVVVADEVHLIDSPDRGPTLEITLSKLRRMNPSCQVLALSATVGNADELAAWLDAELVLSEWRPTDLMEGVFYNGIFYCKDKEKPVGQPTKDEAVNLVLDTIKEGGQCLVFESSRKNCMGFAKKAVSAVKKTLSNEDRETLAGIADEIIENSETDVSSVLATCVRSGTAFHHAGLTTPLRELVENGFREGRIKIISSTPTLAAGLNLPARRVIIRSYRRYSSDSGMQPIPVLEYKQMAGRAGRPRLDPYGEAVLLAKSYEEFVFLFEKYIEAGAEDIWSKLGTENALRTHILSTISNGFARTREELMDFLEATFFAFQYSNFGLSAVVDECLDFLRREGMLEKDPDALVSTVFGKLVSRLYIDPLSAALIAKGLREAGTLTELTLLHLICSTPDMRLMYMRSQDYQEVNDYVMAHAGEFSKVPNPFNIAEYEWFLGEVKTSLLLMDWIHEKPENEICLKFGIGEGDIHATADIAEWIMHVTAQLAGLLDLKGAKEASELEKRIRYGAAPELMDLLDIRSVGRVRARKLYEAGFKSTAELAAASPEHIAVLVGPKITERIFKQIGRREAVSEFSDIEPLEKGSSDGQRTISDY.

ATP-binding positions include Gln-28 and 46-53 (IPTASGKT). Residues 33-199 (EKGLLEGKNL…WLDAELVLSE (167 aa)) enclose the Helicase ATP-binding domain. A DEAH box motif is present at residues 144 to 147 (DEVH). The 202-residue stretch at 232–433 (AVNLVLDTIK…ALRTHILSTI (202 aa)) folds into the Helicase C-terminal domain.

It belongs to the helicase family. Hel308 subfamily. In terms of assembly, monomer.

The enzyme catalyses Couples ATP hydrolysis with the unwinding of duplex DNA by translocating in the 3'-5' direction.. It carries out the reaction ATP + H2O = ADP + phosphate + H(+). DNA-dependent ATPase and 3'-5' DNA helicase that may be involved in repair of stalled replication forks. This is ATP-dependent DNA helicase Hel308 from Methanosarcina mazei (strain ATCC BAA-159 / DSM 3647 / Goe1 / Go1 / JCM 11833 / OCM 88) (Methanosarcina frisia).